Reading from the N-terminus, the 396-residue chain is MVLESTMICFDNSDFQRNGDYFPTRLIVQRDGINLVCLTKLRSNPENNVGLMTLSNTVEVLATLTSDAGRIFSKMHLVQPKGEINLLTGIRIAHLVLKHRQGKNHKMRIVVFVGSPINHEEGDLVKQAKRLKKEKVNVDIVSFGDHGNNNEILTAFINALNGKDGTGSHLVSVPRGSVLSDALLSSPIIQGEDGMGGAGLGGNVFEFGVDPNEDPELALALRVSMEEQRQRQESEQRRANPDGAPPTGGDAGGGGGVSGSGPGNEESAGAENEANTEEAMLQRALALSTETPEDNLPDFANMTEEEQIAFAMQMSMQDAPDDSVTQQAKRPKTDEANAPMDVDEDYSEVIGDPAFLQSVLENLPGVDPQSEAVRDAVGSLNKDKDKKSDGKDSQKK.

In terms of domain architecture, VWFA spans 1–188 (MVLESTMICF…LSDALLSSPI (188 aa)). The UIM 1 domain maps to 212-231 (NEDPELALALRVSMEEQRQR). Residues 225–240 (MEEQRQRQESEQRRAN) are compositionally biased toward basic and acidic residues. 3 disordered regions span residues 225 to 278 (MEEQ…NTEE), 311 to 341 (AMQMSMQDAPDDSVTQQAKRPKTDEANAPMD), and 360 to 396 (LENLPGVDPQSEAVRDAVGSLNKDKDKKSDGKDSQKK). A compositionally biased stretch (gly residues) spans 249-262 (GDAGGGGGVSGSGP). Residues 263 to 278 (GNEESAGAENEANTEE) are compositionally biased toward low complexity. UIM domains are found at residues 276–295 (TEEAMLQRALALSTETPEDN) and 303–322 (TEEEQIAFAMQMSMQDAPDD). Residues 381 to 396 (NKDKDKKSDGKDSQKK) are compositionally biased toward basic and acidic residues.

The protein belongs to the proteasome subunit S5A family. The 26S proteasome is composed of a core protease, known as the 20S proteasome, capped at one or both ends by the 19S regulatory complex (RC). The RC is composed of at least 18 different subunits in two subcomplexes, the base and the lid, which form the portions proximal and distal to the 20S proteolytic core, respectively. Interacts with Ubc4.

Binds and presumably selects ubiquitin-conjugates for destruction. This Drosophila melanogaster (Fruit fly) protein is 26S proteasome non-ATPase regulatory subunit 4 (Rpn10).